A 510-amino-acid chain; its full sequence is Histidine ammonia-lyase (510 aa).

A cross-link (5-imidazolinone (Ala-Gly)) is located at residues A143 to G145. S144 carries the post-translational modification 2,3-didehydroalanine (Ser).

The protein belongs to the PAL/histidase family. Post-translationally, contains an active site 4-methylidene-imidazol-5-one (MIO), which is formed autocatalytically by cyclization and dehydration of residues Ala-Ser-Gly.

It is found in the cytoplasm. It catalyses the reaction L-histidine = trans-urocanate + NH4(+). It participates in amino-acid degradation; L-histidine degradation into L-glutamate; N-formimidoyl-L-glutamate from L-histidine: step 1/3. This chain is Histidine ammonia-lyase, found in Psychromonas ingrahamii (strain DSM 17664 / CCUG 51855 / 37).